A 62-amino-acid chain; its full sequence is Snaclec aspercetin subunit beta (62 aa).

Cys-2 and Cys-13 are disulfide-bonded. In terms of domain architecture, C-type lectin spans 9-62 (YEGHCYRVFKPPKDWADAERFCSQQAKGGHLVSIERFGREDFVSNLITKNLQRG).

Belongs to the snaclec family. Heterodimer; disulfide-linked. Expressed by the venom gland.

Its subcellular location is the secreted. In terms of biological role, snaclec that binds to von Willebrand factor (VWF) and induces its interaction with GPIbalpha (GP1BA) (via the vWF A1 domain), resulting in platelet aggregation. Intramuscular and intravenous injections in mice induce a dose-dependent drop in platelet count (thrombocytopenia). Pretreatment by intravenous injection by this protein in mice potentiates the hemorrhagic lesion in the skin provoked by the metalloproteinase BaP1 intradermally injected. This result is not observed when both BaP1 and this protein are injected simultaneously. The polypeptide is Snaclec aspercetin subunit beta (Bothrops asper (Terciopelo)).